A 1642-amino-acid chain; its full sequence is Cobra venom factor (1642 aa).

The first 22 residues, 1-22, serve as a signal peptide directing secretion; sequence MERMALYLVAALLIGFPGSSHG. N-linked (GlcNAc...) asparagine glycosylation is found at asparagine 153, asparagine 158, and asparagine 209. Residues proline 516, aspartate 539, valine 540, and aspartate 542 each contribute to the Mg(2+) site. 12 cysteine pairs are disulfide-bonded: cysteine 544/cysteine 801, cysteine 609/cysteine 644, cysteine 677/cysteine 704, cysteine 678/cysteine 711, cysteine 691/cysteine 712, cysteine 857/cysteine 1492, cysteine 1340/cysteine 1468, cysteine 1368/cysteine 1437, cysteine 1485/cysteine 1490, cysteine 1497/cysteine 1569, cysteine 1516/cysteine 1640, and cysteine 1616/cysteine 1625. The propeptide occupies 650 to 732; the sequence is RRRRSSVLLL…QRESELFLAR (83 aa). The segment at 654 to 732 is C3a-like domain; that stretch reads SSVLLLDSNA…QRESELFLAR (79 aa). The Anaphylatoxin-like domain maps to 677–712; the sequence is CCEDVMHENPMGYTCEKRAKYIQEGDACKAAFLECC. The segment at 736-747 is factor B binding site; that stretch reads EDGFIADSDIIS. Positions 985 to 1263 are excised as a propeptide; the sequence is HLIITPSGCG…VMAFQALAEY (279 aa). Positions 985-1263 are C3d-like domain; that stretch reads HLIITPSGCG…VMAFQALAEY (279 aa). Positions 993–996 form a cross-link, isoglutamyl cysteine thioester (Cys-Gln); it reads CGEQ. Residues 1190 to 1253 form a factor H binding site region; it reads VLMAASTGRD…GETYGQTQAT (64 aa). A glycan (N-linked (GlcNAc...) asparagine) is linked at asparagine 1346. The 144-residue stretch at 1497 to 1640 folds into the NTR domain; it reads CSSLNHQERI…FSYTLTEFGC (144 aa).

This sequence belongs to the venom complement C3 homolog family. As to quaternary structure, heterotrimer of alpha, beta and gamma chains; disulfide-linked. Is active with factor B in the presence of factor D. First processed by the removal of 4 Arg residues by furin-type protease, forming two chains, alpha and gamma/beta precursor, linked by a disulfide bond. Probably, the cobrin cleaves the C3a-like domain and then the C3d-like domain, generating the mature cobra venom factor (CVF). This mature CVF is composed of three chains: alpha, gamma and beta. Post-translationally, contains 3 N-linked oligosaccharide chains, two in the alpha-chain and one in the beta-chain. Glycosylation is not required for the biological activity. However, it contributes to the immunogenicity of CVF. The carbohydrate content is 7.4. The major oligosaccharide is a symmetric fucosylated biantennary complex-type chain with an unusual alpha-galactosylated Le(x) structure at its non-reducing end. In terms of tissue distribution, expressed by the venom gland.

Its subcellular location is the secreted. In terms of biological role, complement-activating protein in cobra venom. It is a structural and functional analog of complement component C3b, the activated form of C3. It binds factor B (CFB), which is subsequently cleaved by factor D (CFD) to form the bimolecular complex CVF/Bb. CVF/Bb is a C3/C5 convertase that cleaves both complement components C3 and C5. Structurally, it resembles the C3b degradation product C3c, which is not able to form a C3/C5 convertase. Unlike C3b/Bb, CVF/Bb is a stable complex and completely resistant to the actions of complement regulatory factors H (CFH) and I (CFI). Therefore, CVF continuously activates complement resulting in the depletion of complement activity. The chain is Cobra venom factor from Naja kaouthia (Monocled cobra).